Consider the following 578-residue polypeptide: Probable nucleoredoxin 1 (578 aa).

Thioredoxin domains lie at 18 to 172 (SLLS…RARR), 178 to 321 (SVLV…EKFQ), and 325 to 485 (ELEK…EIEA).

It belongs to the nucleoredoxin family.

It catalyses the reaction [protein]-dithiol + NAD(+) = [protein]-disulfide + NADH + H(+). The enzyme catalyses [protein]-dithiol + NADP(+) = [protein]-disulfide + NADPH + H(+). In terms of biological role, probable thiol-disulfide oxidoreductase required for pollen tube growth and pollen function in the pistil. Seems not to be required for in vitro pollen tube growth. May be involved in the generation of lipid signaling molecules in pistil. In Arabidopsis thaliana (Mouse-ear cress), this protein is Probable nucleoredoxin 1.